Reading from the N-terminus, the 267-residue chain is Hydroxyethylthiazole kinase (267 aa).

M44 is a binding site for substrate. Residues R120 and T165 each coordinate ATP. G192 provides a ligand contact to substrate.

The protein belongs to the Thz kinase family. Mg(2+) serves as cofactor.

It carries out the reaction 5-(2-hydroxyethyl)-4-methylthiazole + ATP = 4-methyl-5-(2-phosphooxyethyl)-thiazole + ADP + H(+). It participates in cofactor biosynthesis; thiamine diphosphate biosynthesis; 4-methyl-5-(2-phosphoethyl)-thiazole from 5-(2-hydroxyethyl)-4-methylthiazole: step 1/1. Its function is as follows. Catalyzes the phosphorylation of the hydroxyl group of 4-methyl-5-beta-hydroxyethylthiazole (THZ). The protein is Hydroxyethylthiazole kinase of Carboxydothermus hydrogenoformans (strain ATCC BAA-161 / DSM 6008 / Z-2901).